The primary structure comprises 424 residues: Protein shisa-9 (424 aa).

Positions 1–23 (MRRVLRLLLGCFLTELCARVCRA) are cleaved as a signal peptide. Residues 24 to 149 (QERAGHGQLA…DPLHDPTKDK (126 aa)) lie on the Extracellular side of the membrane. Asn-45, Asn-89, and Asn-116 each carry an N-linked (GlcNAc...) asparagine glycan. The helical transmembrane segment at 150 to 170 (TNLIVYIICGVVAVMVLVGIF) threads the bilayer. The Cytoplasmic segment spans residues 171–424 (TKLGLEKAHR…ITNSKTEVTV (254 aa)). The tract at residues 333–424 (PRAFSPEHGP…ITNSKTEVTV (92 aa)) is disordered. Residues 414–424 (FITNSKTEVTV) are compositionally biased toward polar residues.

Belongs to the shisa family. SHISA9 subfamily. In terms of assembly, component of some AMPA receptors (ionotropic glutamate receptors) complex, at least composed of some AMPA receptor (GRIA1, GRIA2 and/or GRIA3), CACNG2 and SHISA9, as well as low level of DLG4.

The protein localises to the cell projection. Its subcellular location is the dendritic spine membrane. The protein resides in the synapse. Its function is as follows. Regulator of short-term neuronal synaptic plasticity in the dentate gyrus. Associates with AMPA receptors (ionotropic glutamate receptors) in synaptic spines and promotes AMPA receptor desensitization at excitatory synapses. This chain is Protein shisa-9 (SHISA9), found in Homo sapiens (Human).